We begin with the raw amino-acid sequence, 188 residues long: Elongation factor P (188 aa).

Position 34 is an N6-(3,6-diaminohexanoyl)-5-hydroxylysine (Lys34).

The protein belongs to the elongation factor P family. In terms of processing, may be beta-lysylated on the epsilon-amino group of Lys-34 by the combined action of EpmA and EpmB, and then hydroxylated on the C5 position of the same residue by EpmC (if this protein is present). Lysylation is critical for the stimulatory effect of EF-P on peptide-bond formation. The lysylation moiety may extend toward the peptidyltransferase center and stabilize the terminal 3-CCA end of the tRNA. Hydroxylation of the C5 position on Lys-34 may allow additional potential stabilizing hydrogen-bond interactions with the P-tRNA.

The protein localises to the cytoplasm. It functions in the pathway protein biosynthesis; polypeptide chain elongation. Involved in peptide bond synthesis. Alleviates ribosome stalling that occurs when 3 or more consecutive Pro residues or the sequence PPG is present in a protein, possibly by augmenting the peptidyl transferase activity of the ribosome. Modification of Lys-34 is required for alleviation. The polypeptide is Elongation factor P (Xylella fastidiosa (strain M23)).